The following is a 78-amino-acid chain: Large ribosomal subunit protein bL28 (78 aa).

Belongs to the bacterial ribosomal protein bL28 family.

The sequence is that of Large ribosomal subunit protein bL28 from Nostoc sp. (strain PCC 7120 / SAG 25.82 / UTEX 2576).